The sequence spans 179 residues: Large ribosomal subunit protein uL5 (179 aa).

Belongs to the universal ribosomal protein uL5 family. In terms of assembly, part of the 50S ribosomal subunit; part of the 5S rRNA/L5/L18/L25 subcomplex. Contacts the 5S rRNA and the P site tRNA. Forms a bridge to the 30S subunit in the 70S ribosome.

In terms of biological role, this is one of the proteins that bind and probably mediate the attachment of the 5S RNA into the large ribosomal subunit, where it forms part of the central protuberance. In the 70S ribosome it contacts protein S13 of the 30S subunit (bridge B1b), connecting the 2 subunits; this bridge is implicated in subunit movement. Contacts the P site tRNA; the 5S rRNA and some of its associated proteins might help stabilize positioning of ribosome-bound tRNAs. In Salmonella agona (strain SL483), this protein is Large ribosomal subunit protein uL5.